We begin with the raw amino-acid sequence, 162 residues long: Transcriptional repressor NrdR (162 aa).

Residues 1–21 (MNCPDCGNGRTRVIDTGASSD) are disordered. A zinc finger lies at 3-34 (CPDCGNGRTRVIDTGASSDGASVRRRRECQRC). An ATP-cone domain is found at 49–139 (LQVKKRDGTI…VYKAFSEPQE (91 aa)).

Belongs to the NrdR family. Requires Zn(2+) as cofactor.

Functionally, negatively regulates transcription of bacterial ribonucleotide reductase nrd genes and operons by binding to NrdR-boxes. The protein is Transcriptional repressor NrdR of Natronomonas pharaonis (strain ATCC 35678 / DSM 2160 / CIP 103997 / JCM 8858 / NBRC 14720 / NCIMB 2260 / Gabara) (Halobacterium pharaonis).